Here is a 325-residue protein sequence, read N- to C-terminus: Replication factor C small subunit (325 aa).

Gly47–Thr54 contacts ATP.

This sequence belongs to the activator 1 small subunits family. RfcS subfamily. Heteromultimer composed of small subunits (RfcS) and large subunits (RfcL).

Functionally, part of the RFC clamp loader complex which loads the PCNA sliding clamp onto DNA. The protein is Replication factor C small subunit of Aeropyrum pernix (strain ATCC 700893 / DSM 11879 / JCM 9820 / NBRC 100138 / K1).